Here is a 523-residue protein sequence, read N- to C-terminus: Bifunctional purine biosynthesis protein PurH (523 aa).

The MGS-like domain occupies 1–154 (MTATAGSNKR…KNHPSVAVVT (154 aa)).

The protein belongs to the PurH family.

It catalyses the reaction (6R)-10-formyltetrahydrofolate + 5-amino-1-(5-phospho-beta-D-ribosyl)imidazole-4-carboxamide = 5-formamido-1-(5-phospho-D-ribosyl)imidazole-4-carboxamide + (6S)-5,6,7,8-tetrahydrofolate. The enzyme catalyses IMP + H2O = 5-formamido-1-(5-phospho-D-ribosyl)imidazole-4-carboxamide. The protein operates within purine metabolism; IMP biosynthesis via de novo pathway; 5-formamido-1-(5-phospho-D-ribosyl)imidazole-4-carboxamide from 5-amino-1-(5-phospho-D-ribosyl)imidazole-4-carboxamide (10-formyl THF route): step 1/1. It participates in purine metabolism; IMP biosynthesis via de novo pathway; IMP from 5-formamido-1-(5-phospho-D-ribosyl)imidazole-4-carboxamide: step 1/1. The chain is Bifunctional purine biosynthesis protein PurH from Streptomyces coelicolor (strain ATCC BAA-471 / A3(2) / M145).